Consider the following 175-residue polypeptide: Ribosome-binding factor A (175 aa).

Residues 131–175 are disordered; the sequence is KPAGEADPYRDRGSVDEPSDAGGLVIRTSDGLEAENTGDDYQAED. Residues 162-175 are compositionally biased toward acidic residues; the sequence is LEAENTGDDYQAED.

This sequence belongs to the RbfA family. Monomer. Binds 30S ribosomal subunits, but not 50S ribosomal subunits or 70S ribosomes.

Its subcellular location is the cytoplasm. One of several proteins that assist in the late maturation steps of the functional core of the 30S ribosomal subunit. Associates with free 30S ribosomal subunits (but not with 30S subunits that are part of 70S ribosomes or polysomes). Required for efficient processing of 16S rRNA. May interact with the 5'-terminal helix region of 16S rRNA. The sequence is that of Ribosome-binding factor A from Mycobacterium ulcerans (strain Agy99).